Here is a 612-residue protein sequence, read N- to C-terminus: MENQLAKSIEERTFQYQDSLPPLPVPSLEESLKKYLESVKPFANEDEYKKTEEIVQKFQDGVGKTLHQKLLERAKGKRNWLEEWWLNVAYLDVRIPSQLNVNFVGPSPHFEHYWPAREGTQLERGSILLWHNLNYWQLLRREKLPVHKSGNTPLDMNQFRMLFSTCKVPGITRDSIMNYFKTESEGHCPTHIAVLCRGRAFVFDVLHDGCLITPPELLRQLTYIYQKCWNEPVGPSIAALTSEERTRWAKAREYLIGLDPENLTLLEKIQSSLFVYSIEDTSPHATPENFSQVFEMLLGGDPAVRWGDKSYNLISFANGIFGCSCDHAPYDAMLMVNIAHYVDEKLLETEGRWKGSEKVRDIPLPEELAFTVDEKILNDVYQAKAQHLKAASDLQIAASTFTSFGKKLTKKEALHPDTFIQLALQLAYYRLHGRPGCCYETAMTRYFYHGRTETVRSCTVEAVRWCQSMQDPSASLLERQQKMLDAFAKHNKMMRDCSHGKGFDRHLLGLLLIAKEEGLPVPELFEDPLFSRSGGGGNFVLSTSLVGYLRIQGVVVPMVHNGYGFFYHIRDDRFVVTCSSWRSCLETDAEKLVEMIFHAFHDMIHLMNTAHL.

M1 bears the N-acetylmethionine mark. Residues K40 and K57 each carry the N6-succinyllysine modification. H327 serves as the catalytic Proton acceptor. CoA-binding positions include K406 and K410–D417. The residue at position 406 (K406) is an N6-acetyllysine; alternate. K406 carries the N6-succinyllysine; alternate modification. Y439, T441, and T452 together coordinate (R)-carnitine. The short motif at A610–L612 is the Microbody targeting signal element.

Belongs to the carnitine/choline acetyltransferase family. As to expression, liver.

Its subcellular location is the peroxisome. The catalysed reaction is octanoyl-CoA + (R)-carnitine = O-octanoyl-(R)-carnitine + CoA. It carries out the reaction 4,8-dimethylnonanoyl-CoA + (R)-carnitine = O-4,8-dimethylnonanoyl-(R)-carnitine + CoA. Its pathway is lipid metabolism; fatty acid beta-oxidation. In terms of biological role, beta-oxidation of fatty acids. The highest activity concerns the C6 to C10 chain length substrate. This chain is Peroxisomal carnitine O-octanoyltransferase (Crot), found in Rattus norvegicus (Rat).